Here is a 394-residue protein sequence, read N- to C-terminus: 5-azacytidine-induced protein 2 (394 aa).

The tract at residues 1-197 (MDALVEDDIC…IELRKAKQTD (197 aa)) is homodimerization. Coiled-coil stretches lie at residues 40-76 (ALVTAYEDIKKRLKDSEKENSLLKKRIRFLEEKLIAR) and 102-196 (DRDN…AKQT). The interval 216–257 (SDNMQHAYWELKREMSNLHLVTQVQAELLRKLKTSTAIKKAC) is interaction with TBK1 and IKBKE. 2 positions are modified to phosphoserine: S318 and S355. The disordered stretch occupies residues 355-379 (SPPKSSETAFGETKSKTLPLPNLPP).

As to quaternary structure, homodimer. Interacts with IKBKE, TBK1 and TICAM1. Interacts with TAX1BP1. Interacts with CALCOCO2. Ubiquitinated via 'Lys-48'-linked polyubiquitination by TRIM38, leading to its degradation.

The protein localises to the cytoplasm. Adapter protein which binds TBK1 and IKBKE playing a role in antiviral innate immunity. Activates serine/threonine-protein kinase TBK1 and facilitates its oligomerization. Enhances the phosphorylation of NF-kappa-B p65 subunit RELA by TBK1. Promotes TBK1-induced as well as TNF-alpha or PMA-induced activation of NF-kappa-B. Participates in IFNB promoter activation via TICAM1. The chain is 5-azacytidine-induced protein 2 (AZI2) from Macaca fascicularis (Crab-eating macaque).